Reading from the N-terminus, the 135-residue chain is Holo-[acyl-carrier-protein] synthase (135 aa).

Residues Asp-8 and Glu-57 each contribute to the Mg(2+) site.

It belongs to the P-Pant transferase superfamily. AcpS family. The cofactor is Mg(2+).

It is found in the cytoplasm. It carries out the reaction apo-[ACP] + CoA = holo-[ACP] + adenosine 3',5'-bisphosphate + H(+). Its function is as follows. Transfers the 4'-phosphopantetheine moiety from coenzyme A to a Ser of acyl-carrier-protein. The sequence is that of Holo-[acyl-carrier-protein] synthase from Xanthobacter autotrophicus (strain ATCC BAA-1158 / Py2).